The following is a 130-amino-acid chain: Small ribosomal subunit protein uS11c (130 aa).

Belongs to the universal ribosomal protein uS11 family. Part of the 30S ribosomal subunit.

The protein localises to the plastid. The protein resides in the chloroplast. The chain is Small ribosomal subunit protein uS11c from Bigelowiella natans (Pedinomonas minutissima).